The chain runs to 197 residues: uncharacterized protein (197 aa).

This is an uncharacterized protein from Caenorhabditis elegans.